The following is a 95-amino-acid chain: Small ribosomal subunit protein uS19 (95 aa).

Residues 76 to 95 (PTRTFRGHGGKKADKRGKLK) are disordered. Residues 80–95 (FRGHGGKKADKRGKLK) show a composition bias toward basic residues.

This sequence belongs to the universal ribosomal protein uS19 family.

Its function is as follows. Protein S19 forms a complex with S13 that binds strongly to the 16S ribosomal RNA. The polypeptide is Small ribosomal subunit protein uS19 (Herpetosiphon aurantiacus (strain ATCC 23779 / DSM 785 / 114-95)).